Consider the following 67-residue polypeptide: Large ribosomal subunit protein bL35 (67 aa).

Residues 1–41 (MPKMKTHRGAAKRFKKTGTGKLKRSHAYTSHMFRHKSQKQK) are disordered.

Belongs to the bacterial ribosomal protein bL35 family.

The sequence is that of Large ribosomal subunit protein bL35 from Shouchella clausii (strain KSM-K16) (Alkalihalobacillus clausii).